A 209-amino-acid polypeptide reads, in one-letter code: Small ribosomal subunit protein uS5 (209 aa).

Residues 48–111 (LEDEVLDINM…DAAKLNITYI (64 aa)) enclose the S5 DRBM domain.

The protein belongs to the universal ribosomal protein uS5 family. Part of the 30S ribosomal subunit. Contacts protein S4.

Its function is as follows. With S4 and S12 plays an important role in translational accuracy. The sequence is that of Small ribosomal subunit protein uS5 from Methanosarcina mazei (strain ATCC BAA-159 / DSM 3647 / Goe1 / Go1 / JCM 11833 / OCM 88) (Methanosarcina frisia).